A 768-amino-acid chain; its full sequence is Telomere repeats-binding bouquet formation protein 1 (768 aa).

2 ARM repeats span residues 101–145 and 341–384; these read ELFQ…REVG and NGLP…GQNS. Residues 399-448 are a coiled coil; it reads ETLREHWKAAKEILCRIKQFEKGGKEEKQQNRSGHYKDNTPSMKVNIQTN. Composition is skewed to basic and acidic residues over residues 422–436 and 461–475; these read GKEEKQQNRSGHYKD and RAEDKDINQSRELRS. Disordered regions lie at residues 422–441 and 454–475; these read GKEEKQQNRSGHYKDNTPSM and ADSTGGTRAEDKDINQSRELRS. An interaction with TERF1 region spans residues 524–700; that stretch reads QNLDKEKTFD…EAMERRSPVP (177 aa). Residue threonine 648 is modified to Phosphothreonine. The Myb-like domain maps to 707 to 760; the sequence is KKRRIRKDFTKEEVNYLFHGVKTMGNHWNSILWSFPFQKGRRAVDLAHKYHRLI.

The protein belongs to the TERB1 family. In terms of assembly, component of the MAJIN-TERB1-TERB2 complex, composed of MAJIN, TERB1 and TERB2. Interacts with TERF1, STAG3 and SUN1. Interacts (via Myb-like domain) with the cohesin complex; probably mediated via interaction with STAG3. In terms of processing, phosphorylated by CDK. Phosphorylation by CDK takes place in late prophase when the cap exchange is prominent. is important for the stabilization of telomere attachment but dispenable for the cap exchange. Expressed in testis and fetal oocytes.

It is found in the chromosome. The protein resides in the telomere. Its subcellular location is the nucleus inner membrane. In terms of biological role, meiosis-specific telomere-associated protein involved in meiotic telomere attachment to the nucleus inner membrane, a crucial step for homologous pairing and synapsis. Component of the MAJIN-TERB1-TERB2 complex, which promotes telomere cap exchange by mediating attachment of telomeric DNA to the inner nuclear membrane and replacement of the protective cap of telomeric chromosomes: in early meiosis, the MAJIN-TERB1-TERB2 complex associates with telomeric DNA and the shelterin/telosome complex. During prophase, the complex matures and promotes release of the shelterin/telosome complex from telomeric DNA. In the MAJIN-TERB1-TERB2 complex, TERB1 probably mediates association with the shelterin/telosome complex via interaction with TERF1, promoting priming telomeric DNA attachment'. Promotes telomere association with the nuclear envelope and deposition of the SUN-KASH/LINC complex. Also recruits cohesin to telomeres to develop structural rigidity. This chain is Telomere repeats-binding bouquet formation protein 1, found in Mus musculus (Mouse).